Reading from the N-terminus, the 122-residue chain is Holo-[acyl-carrier-protein] synthase (122 aa).

Asp-8 and Glu-60 together coordinate Mg(2+).

The protein belongs to the P-Pant transferase superfamily. AcpS family. It depends on Mg(2+) as a cofactor.

It is found in the cytoplasm. The enzyme catalyses apo-[ACP] + CoA = holo-[ACP] + adenosine 3',5'-bisphosphate + H(+). In terms of biological role, transfers the 4'-phosphopantetheine moiety from coenzyme A to a Ser of acyl-carrier-protein. The sequence is that of Holo-[acyl-carrier-protein] synthase from Anaplasma phagocytophilum (strain HZ).